The following is a 312-amino-acid chain: Light-independent protochlorophyllide reductase iron-sulfur ATP-binding protein (312 aa).

Residues 55 to 60 (GIGKST) and Lys-84 contribute to the ATP site. Ser-59 is a binding site for Mg(2+). Residues Cys-140 and Cys-174 each contribute to the [4Fe-4S] cluster site. ATP is bound by residues 225–226 (NR) and 249–251 (PDL).

It belongs to the NifH/BchL/ChlL family. Homodimer. Protochlorophyllide reductase is composed of three subunits; BchL, BchN and BchB. Requires [4Fe-4S] cluster as cofactor.

The catalysed reaction is chlorophyllide a + oxidized 2[4Fe-4S]-[ferredoxin] + 2 ADP + 2 phosphate = protochlorophyllide a + reduced 2[4Fe-4S]-[ferredoxin] + 2 ATP + 2 H2O. The protein operates within porphyrin-containing compound metabolism; bacteriochlorophyll biosynthesis (light-independent). In terms of biological role, component of the dark-operative protochlorophyllide reductase (DPOR) that uses Mg-ATP and reduced ferredoxin to reduce ring D of protochlorophyllide (Pchlide) to form chlorophyllide a (Chlide). This reaction is light-independent. The L component serves as a unique electron donor to the NB-component of the complex, and binds Mg-ATP. In Rhodopseudomonas palustris (strain ATCC BAA-98 / CGA009), this protein is Light-independent protochlorophyllide reductase iron-sulfur ATP-binding protein.